We begin with the raw amino-acid sequence, 211 residues long: Endonuclease III (211 aa).

The 20-residue stretch at Arg-108–Asn-127 folds into the HhH domain. [4Fe-4S] cluster-binding residues include Cys-187, Cys-194, Cys-197, and Cys-203.

It belongs to the Nth/MutY family. [4Fe-4S] cluster serves as cofactor.

The enzyme catalyses 2'-deoxyribonucleotide-(2'-deoxyribose 5'-phosphate)-2'-deoxyribonucleotide-DNA = a 3'-end 2'-deoxyribonucleotide-(2,3-dehydro-2,3-deoxyribose 5'-phosphate)-DNA + a 5'-end 5'-phospho-2'-deoxyribonucleoside-DNA + H(+). DNA repair enzyme that has both DNA N-glycosylase activity and AP-lyase activity. The DNA N-glycosylase activity releases various damaged pyrimidines from DNA by cleaving the N-glycosidic bond, leaving an AP (apurinic/apyrimidinic) site. The AP-lyase activity cleaves the phosphodiester bond 3' to the AP site by a beta-elimination, leaving a 3'-terminal unsaturated sugar and a product with a terminal 5'-phosphate. The sequence is that of Endonuclease III from Escherichia coli O6:H1 (strain CFT073 / ATCC 700928 / UPEC).